A 160-amino-acid chain; its full sequence is Myosin regulatory light chain, smooth muscle (160 aa).

Ser1 carries the post-translational modification Blocked amino end (Ser). Residue Ser11 is modified to Phosphoserine. EF-hand domains are found at residues 20 to 55 (NQIQEMKEAFTMIDQNRDGLIDVSDLKEMYSNLGTA) and 88 to 123 (DPEETLRNAFQMFDSDNTGYIPEEYMKDLLENMGDN). The Ca(2+) site is built by Asp33, Asn35, Asp37, and Asp44.

In terms of biological role, in molluscan muscle, calcium regulation is associated with myosin rather than with actin. Muscle myosin contains two types of light chains: the catalytic light chain, essential for ATPase activity, and the regulatory light chain, a calcium-binding protein responsible for Ca(2+) dependent binding and Ca(2+) dependent Mg-ATPase activity. This chain is Myosin regulatory light chain, smooth muscle, found in Spisula sachalinensis (Sakhalin surf-clam).